We begin with the raw amino-acid sequence, 223 residues long: Ethylene-inducing xylanase (223 aa).

The first 19 residues, 1 to 19 (MVSFTTLLAGFVAVTGVLS), serve as a signal peptide directing secretion. A GH11 domain is found at 34–223 (QTIGPGTGFN…SSGNANINVS (190 aa)). N94 carries N-linked (GlcNAc...) asparagine glycosylation. Residue E119 is the Nucleophile of the active site. The active-site Proton donor is E210.

This sequence belongs to the glycosyl hydrolase 11 (cellulase G) family. As to quaternary structure, interactc with tomato LeEix2 receptor to trigger its internalization.

The protein resides in the secreted. The enzyme catalyses Endohydrolysis of (1-&gt;4)-beta-D-xylosidic linkages in xylans.. It functions in the pathway glycan degradation; xylan degradation. Functionally, endo-1,4-beta-xylanase involved in the hydrolysis of xylan, a major structural heterogeneous polysaccharide found in plant biomass representing the second most abundant polysaccharide in the biosphere, after cellulose. Acts as an elicitor of plant defense responses in hosts such as tobacco (Nicotiana tabacum) or tomato (Solanum lycopersicum). Induces the production of ethylene and leads alterations in membrane function with rapid efflux of potassium, uptake of calcium, alkalization of the medium, increased leakage of cellular components and necrosis in plant hosts. EIX is translocated through the xylem of the host plant to the leaf mesophyll, leading to host response to pathogen-derived extracellular proteins in tissues distant from the invading pathogen. Greatly enhances the expression of two calcineurin B-like proteins-interacting protein kinases (CIPKs) family members, OsCIPK14 and OsCIPK15, in rice cultured cells. In tomato, triggers the defense response via binding to and subsequent internalization of the LeEix2 receptor. The protein is Ethylene-inducing xylanase of Hypocrea rufa (Trichoderma viride).